The chain runs to 828 residues: MVSFLTLTSFFFICFFIHGSSAVDTISGDFTLSGDQTIVSSDGTYEMGFFKPGSSSNFYIGMWYKQLSQTILWVANRDKAVSDKNSSVFKISNGNLILLDGNYQTPVWSTGLNSTSSVSALEAVLQDDGNLVLRTGGSSLSANVLWQSFDHPGDTWLPGVKIRLDKRTGKSQRLTSWKSLEDPSPGLFSLELDESTAYKILWNGSNEYWSSGPWNPQSRIFDSVPEMRLNYIYNFSFFSNTTDSYFTYSIYNQLNVSRFVMDVSGQIKQFTWLEGNKAWNLFWSQPRQQCQVYRYCGSFGICSDKSEPFCRCPQGFRPMSQKDWDLKDYSAGCVRKTELQCSRGDINQFFRLPNMKLADNSEVLTRTSLSICASACQGDCSCKAYAYDEGSSKCLVWSKDVLNLQQLEDENSEGNIFYLRLAASDVPNVGASGKSNNKGLIFGAVLGSLGVIVLVLLVVILILRYRRRKRMRGEKGDGTLSAFSYRELQNATKNFSDKLGGGGFGSVFKGALPDSSDIAVKRLEGISQGEKQFRTEVVTIGTIQHVNLVRLRGFCSEGSKKLLVYDYMPNGSLDSHLFLNQVEEKIVLGWKLRFQIALGTARGLAYLHDECRDCIIHCDIKPENILLDSQFCPKVADFGLAKLVGRDFSRVLTTMRGTRGYLAPEWISGVAITAKADVYSYGMMLFELVSGRRNTEQSENEKVRFFPSWAATILTKDGDIRSLVDPRLEGDAVDIEEVTRACKVACWCIQDEESHRPAMSQVVQILEGVLEVNPPPFPRSIQALVVSDEDVVFFTESSSSSSHNSSQNHKHSSSSSSSKKMTNDNSSA.

The first 22 residues, 1 to 22 (MVSFLTLTSFFFICFFIHGSSA), serve as a signal peptide directing secretion. Positions 23-146 (VDTISGDFTL…GSSLSANVLW (124 aa)) constitute a Bulb-type lectin domain. The Extracellular segment spans residues 23-439 (VDTISGDFTL…GASGKSNNKG (417 aa)). Residues Asn85, Asn113, Asn203, Asn234, Asn240, and Asn255 are each glycosylated (N-linked (GlcNAc...) asparagine). The region spanning 286–322 (PRQQCQVYRYCGSFGICSDKSEPFCRCPQGFRPMSQK) is the EGF-like domain. Intrachain disulfides connect Cys290–Cys302, Cys296–Cys310, Cys372–Cys394, and Cys376–Cys382. The region spanning 341–422 (CSRGDINQFF…EGNIFYLRLA (82 aa)) is the PAN domain. A helical membrane pass occupies residues 440 to 460 (LIFGAVLGSLGVIVLVLLVVI). Over 461 to 828 (LILRYRRRKR…KKMTNDNSSA (368 aa)) the chain is Cytoplasmic. The Protein kinase domain maps to 493-770 (KNFSDKLGGG…QVVQILEGVL (278 aa)). Residues 499–507 (LGGGGFGSV) and Lys521 contribute to the ATP site. Ser527 bears the Phosphoserine mark. Positions 582–600 (VEEKIVLGWKLRFQIALGT) are caM-binding. Asp619 acts as the Proton acceptor in catalysis. Residue Thr653 is modified to Phosphothreonine. The interval 796-828 (ESSSSSSHNSSQNHKHSSSSSSSKKMTNDNSSA) is disordered. A compositionally biased stretch (low complexity) spans 797-828 (SSSSSSHNSSQNHKHSSSSSSSKKMTNDNSSA). Position 815 is a phosphoserine (Ser815).

Belongs to the protein kinase superfamily. Ser/Thr protein kinase family.

The protein localises to the cell membrane. It carries out the reaction L-seryl-[protein] + ATP = O-phospho-L-seryl-[protein] + ADP + H(+). The catalysed reaction is L-threonyl-[protein] + ATP = O-phospho-L-threonyl-[protein] + ADP + H(+). This is G-type lectin S-receptor-like serine/threonine-protein kinase At2g19130 from Arabidopsis thaliana (Mouse-ear cress).